We begin with the raw amino-acid sequence, 193 residues long: Probable nicotinate-nucleotide adenylyltransferase (193 aa).

The protein belongs to the NadD family.

The catalysed reaction is nicotinate beta-D-ribonucleotide + ATP + H(+) = deamido-NAD(+) + diphosphate. The protein operates within cofactor biosynthesis; NAD(+) biosynthesis; deamido-NAD(+) from nicotinate D-ribonucleotide: step 1/1. In terms of biological role, catalyzes the reversible adenylation of nicotinate mononucleotide (NaMN) to nicotinic acid adenine dinucleotide (NaAD). The sequence is that of Probable nicotinate-nucleotide adenylyltransferase from Flavobacterium johnsoniae (strain ATCC 17061 / DSM 2064 / JCM 8514 / BCRC 14874 / CCUG 350202 / NBRC 14942 / NCIMB 11054 / UW101) (Cytophaga johnsonae).